A 257-amino-acid chain; its full sequence is Probable amino-acid ABC transporter ATP-binding protein HI_1078 (257 aa).

In terms of domain architecture, ABC transporter spans 4–244; it reads LKVSNIQKNF…PQHERTKQFL (241 aa). Residue 36–43 coordinates ATP; that stretch reads GPSGSGKT.

The protein belongs to the ABC transporter superfamily.

The protein localises to the cell inner membrane. Its function is as follows. Probably part of a binding-protein-dependent transport system for an amino acid. Probably responsible for energy coupling to the transport system. This Haemophilus influenzae (strain ATCC 51907 / DSM 11121 / KW20 / Rd) protein is Probable amino-acid ABC transporter ATP-binding protein HI_1078.